Reading from the N-terminus, the 300-residue chain is MLDSLLALGGLVLLRDSVEWEGRSLLKALVKKSALCGEQVHILGCEVSEEEFREGFDSDINNRLVYHDFFRDPLNWSKTEEAFPGGPLGALRAMCKRTDPVPVTIALDSLSWLLLRLPCTTLCQVLHAVSHQDSCPGDSSSVGKVSVLGLLHEELHGPGPVGALSSLAQTEVTLGGTMGQASAHILCRRPRQRPTDQTQWFSILPDFSLDLQEGPSVESQPYSDPHIPPVDPTTHLTFNLHLSKKEREARDSLILPFQFSSEKQQALLRPRPGQATSHIFYEPDAYDDLDQEDPDDDLDI.

At Ser-252 the chain carries Phosphoserine. The interval 264–300 (QQALLRPRPGQATSHIFYEPDAYDDLDQEDPDDDLDI) is disordered. Over residues 284–300 (DAYDDLDQEDPDDDLDI) the composition is skewed to acidic residues.

It belongs to the ELP5 family. In terms of assembly, component of the elongator complex which consists of ELP1, ELP2, ELP3, ELP4, ELP5 and ELP6; in the complex, is required for optimal binding of ELP3 to ELP4. In terms of processing, tyrosine-phosphorylated. As to expression, ubiquitously expressed with high levels in heart, brain, liver, skeletal muscle and testis.

The protein resides in the nucleus. Its subcellular location is the cytoplasm. The protein operates within tRNA modification; 5-methoxycarbonylmethyl-2-thiouridine-tRNA biosynthesis. Component of the elongator complex which is required for multiple tRNA modifications, including mcm5U (5-methoxycarbonylmethyl uridine), mcm5s2U (5-methoxycarbonylmethyl-2-thiouridine), and ncm5U (5-carbamoylmethyl uridine). The elongator complex catalyzes formation of carboxymethyluridine in the wobble base at position 34 in tRNAs. Involved in cell migration. This chain is Elongator complex protein 5, found in Homo sapiens (Human).